We begin with the raw amino-acid sequence, 1320 residues long: Centrosomin (1320 aa).

A disordered region spans residues 20–41 (ASFDVPRPPGGGNSPLPSQGRS). The stretch at 97–516 (RKTVDVKMEL…SSQEKEIKKL (420 aa)) forms a coiled coil. The span at 517–530 (NQENEQSANKENDC) shows a compositional bias: basic and acidic residues. Residues 517–554 (NQENEQSANKENDCAKTVISPSSSGRSMSDNEASSQEM) form a disordered region. The segment covering 535-554 (ISPSSSGRSMSDNEASSQEM) has biased composition (polar residues). Position 545 is a phosphoserine (S545). 2 coiled-coil regions span residues 626-654 (EADL…KVDV) and 712-983 (NSLL…LKLA). The Nuclear localization signal signature appears at 644 to 656 (RNKLLQRKVDVLF). The residue at position 782 (T782) is a Phosphothreonine. A Phosphoserine modification is found at S785. The segment covering 810 to 823 (KKELEKRRSSEGQR) has biased composition (basic and acidic residues). Disordered stretches follow at residues 810 to 849 (KKEL…SEPD) and 863 to 893 (SNSL…NRNS). A compositionally biased stretch (polar residues) spans 831 to 843 (LPSQQFDNQSESE). S874, S876, S878, S1191, S1234, S1237, and S1239 each carry phosphoserine. A disordered region spans residues 1220–1249 (VEMKTEGSASPKAKSEESTSPDSKSNVATG). Over residues 1237–1247 (STSPDSKSNVA) the composition is skewed to polar residues.

As to quaternary structure, monomer. As to expression, developing visceral mesoderm of the midgut, the central and peripheral nervous system, and developing gonads. Isoform J: Expressed in ovaries, testis and embryos. Isoform A: Expressed in testis only.

It is found in the cytoplasm. The protein localises to the cytoskeleton. It localises to the microtubule organizing center. The protein resides in the centrosome. Its subcellular location is the flagellum basal body. It is found in the perinuclear region. In terms of biological role, core component of the centrosome throughout spermatogenesis. May participate in mitotic spindle assembly and the mechanics of morphogenesis through an interaction with microtubules, either directly or indirectly. Is a target of several homeotic genes. This Drosophila melanogaster (Fruit fly) protein is Centrosomin (cnn).